The sequence spans 31 residues: Photosystem II reaction center protein T (31 aa).

The helical transmembrane segment at 3–23 threads the bilayer; it reads ALVYTFLLVTTLGILFFSIIF.

Belongs to the PsbT family. PSII is composed of 1 copy each of membrane proteins PsbA, PsbB, PsbC, PsbD, PsbE, PsbF, PsbH, PsbI, PsbJ, PsbK, PsbL, PsbM, PsbT, PsbX, PsbY, PsbZ, Psb30/Ycf12, at least 3 peripheral proteins of the oxygen-evolving complex and a large number of cofactors. It forms dimeric complexes.

It is found in the plastid. The protein resides in the cyanelle thylakoid membrane. In terms of biological role, found at the monomer-monomer interface of the photosystem II (PS II) dimer, plays a role in assembly and dimerization of PSII. PSII is a light-driven water plastoquinone oxidoreductase, using light energy to abstract electrons from H(2)O, generating a proton gradient subsequently used for ATP formation. This Cyanophora paradoxa protein is Photosystem II reaction center protein T.